We begin with the raw amino-acid sequence, 36 residues long: Beta/delta/mu-theraphotoxin-Pv1 (36 aa).

Disulfide bonds link C3–C17, C10–C22, and C16–C30. Position 36 is a phenylalanine amide (F36).

It belongs to the neurotoxin 10 (Hwtx-1) family. Expressed by the venom gland.

It is found in the secreted. Functionally, gating-modifier toxin that targets voltage-gated sodium channels. Inhibits the inactivation of Nav1.7/SCN9A. This is Beta/delta/mu-theraphotoxin-Pv1 from Poecilotheria vittata (Ghost ornamental tarantula).